The chain runs to 218 residues: Pyridoxine/pyridoxamine 5'-phosphate oxidase (218 aa).

Residues 14–17 and Lys72 contribute to the substrate site; that span reads RREY. Residues 67-72, 82-83, Arg88, Lys89, and Gln111 each bind FMN; these read RIVLLK and YT. Substrate-binding residues include Tyr129, Arg133, and Ser137. FMN is bound by residues 146 to 147 and Trp191; that span reads QS. 197-199 is a substrate binding site; it reads RLH. Position 201 (Arg201) interacts with FMN.

The protein belongs to the pyridoxamine 5'-phosphate oxidase family. Homodimer. FMN serves as cofactor.

The catalysed reaction is pyridoxamine 5'-phosphate + O2 + H2O = pyridoxal 5'-phosphate + H2O2 + NH4(+). It carries out the reaction pyridoxine 5'-phosphate + O2 = pyridoxal 5'-phosphate + H2O2. It functions in the pathway cofactor metabolism; pyridoxal 5'-phosphate salvage; pyridoxal 5'-phosphate from pyridoxamine 5'-phosphate: step 1/1. It participates in cofactor metabolism; pyridoxal 5'-phosphate salvage; pyridoxal 5'-phosphate from pyridoxine 5'-phosphate: step 1/1. Its function is as follows. Catalyzes the oxidation of either pyridoxine 5'-phosphate (PNP) or pyridoxamine 5'-phosphate (PMP) into pyridoxal 5'-phosphate (PLP). The polypeptide is Pyridoxine/pyridoxamine 5'-phosphate oxidase (Cronobacter sakazakii (strain ATCC BAA-894) (Enterobacter sakazakii)).